The chain runs to 286 residues: uncharacterized protein (286 aa).

Residues 152-182 (YPSTTTSVTPGKKGEKTTKVDGFSSPLNQDT) are disordered. The helical transmembrane segment at 198–218 (VLIAVTLFVSGIAITVFVIFE) threads the bilayer. Residues 239–278 (RRPRKEDQQPGTAESQSDTQPKKVGQEAPNSSSPKKAVEI) are disordered. The segment covering 247-257 (QPGTAESQSDT) has biased composition (polar residues).

It is found in the membrane. This is an uncharacterized protein from Bos taurus (Bovine).